Consider the following 538-residue polypeptide: Cryptic outer membrane porin BglH (538 aa).

The first 25 residues, 1 to 25, serve as a signal peptide directing secretion; that stretch reads MFRRNLITSAILLMAPLAFSAQSLA. Positions 52 to 82 are disordered; it reads KDEEKKKYTPATVNRSVSTNDQGYAANPFPT. Over residues 62–73 the composition is skewed to polar residues; the sequence is ATVNRSVSTNDQ.

This sequence belongs to the porin LamB (TC 1.B.3) family. In terms of assembly, homomonomer; no physical evidence of a homotrimer has been found, however conductance experiments suggest it may be a homotrimer. The monomer probably consists of 18 antiparallel beta-strands.

The protein localises to the cell outer membrane. Functionally, part of a cryptic operon that is poorly expressed in vivo. May be an ancestral sugar porin with a broad carbohydrate specificity; it binds aromatic beta-D-glucosides such as arbutin and salicin, but with low affinity compared to the binding of maltooligosaccharides to the LamB porin. In Escherichia coli (strain K12), this protein is Cryptic outer membrane porin BglH (bglH).